We begin with the raw amino-acid sequence, 261 residues long: Monensin polyketide synthase putative ketoacyl reductase (261 aa).

10–34 (LVTGATSGIGLATARLLAAQGHLVF) contributes to the NAD(+) binding site. Substrate is bound at residue serine 144. Tyrosine 157 serves as the catalytic Proton acceptor.

This sequence belongs to the short-chain dehydrogenases/reductases (SDR) family.

The protein operates within antifungal biosynthesis; monensin biosynthesis. This Streptomyces virginiae (Streptomyces cinnamonensis) protein is Monensin polyketide synthase putative ketoacyl reductase.